A 616-amino-acid chain; its full sequence is Glutamine--fructose-6-phosphate aminotransferase [isomerizing] (616 aa).

Cys-2 acts as the Nucleophile; for GATase activity in catalysis. The Glutamine amidotransferase type-2 domain occupies 2–222 (CGIIGYSGPR…QERIVALSGD (221 aa)). Positions 70 to 89 (TGIGHTRWATHGEPSDRNAH) are disordered. 2 consecutive SIS domains span residues 289 to 428 (IRDD…LRGF) and 461 to 606 (LAHW…VDRP). Catalysis depends on Lys-611, which acts as the For Fru-6P isomerization activity.

Homodimer.

Its subcellular location is the cytoplasm. The catalysed reaction is D-fructose 6-phosphate + L-glutamine = D-glucosamine 6-phosphate + L-glutamate. Catalyzes the first step in hexosamine metabolism, converting fructose-6P into glucosamine-6P using glutamine as a nitrogen source. The polypeptide is Glutamine--fructose-6-phosphate aminotransferase [isomerizing] (Tropheryma whipplei (strain Twist) (Whipple's bacillus)).